The chain runs to 67 residues: uncharacterized protein (67 aa).

This sequence to E.coli YbdD.

This is an uncharacterized protein from Escherichia coli O157:H7.